A 473-amino-acid chain; its full sequence is Ribulose bisphosphate carboxylase large chain (473 aa).

2 residues coordinate substrate: asparagine 116 and threonine 166. Catalysis depends on lysine 168, which acts as the Proton acceptor. Position 170 (lysine 170) interacts with substrate. Mg(2+)-binding residues include lysine 194, aspartate 196, and glutamate 197. Residue lysine 194 is modified to N6-carboxylysine. The Proton acceptor role is filled by histidine 287. Residues arginine 288, histidine 320, and serine 372 each contribute to the substrate site.

This sequence belongs to the RuBisCO large chain family. Type I subfamily. As to quaternary structure, heterohexadecamer of 8 large chains and 8 small chains. Mg(2+) serves as cofactor.

The enzyme catalyses 2 (2R)-3-phosphoglycerate + 2 H(+) = D-ribulose 1,5-bisphosphate + CO2 + H2O. The catalysed reaction is D-ribulose 1,5-bisphosphate + O2 = 2-phosphoglycolate + (2R)-3-phosphoglycerate + 2 H(+). RuBisCO catalyzes two reactions: the carboxylation of D-ribulose 1,5-bisphosphate, the primary event in carbon dioxide fixation, as well as the oxidative fragmentation of the pentose substrate. Both reactions occur simultaneously and in competition at the same active site. The sequence is that of Ribulose bisphosphate carboxylase large chain from Alkalilimnicola ehrlichii (strain ATCC BAA-1101 / DSM 17681 / MLHE-1).